Here is a 375-residue protein sequence, read N- to C-terminus: Probable L-tyrosine/L-aspartate decarboxylase (375 aa).

K226 bears the N6-(pyridoxal phosphate)lysine mark.

It belongs to the group II decarboxylase family. MfnA subfamily. Pyridoxal 5'-phosphate is required as a cofactor.

The enzyme catalyses L-tyrosine + H(+) = tyramine + CO2. The catalysed reaction is L-aspartate + H(+) = beta-alanine + CO2. Its pathway is cofactor biosynthesis; methanofuran biosynthesis. It functions in the pathway cofactor biosynthesis; coenzyme A biosynthesis. In terms of biological role, catalyzes the decarboxylation of L-tyrosine to produce tyramine for methanofuran biosynthesis. Can also catalyze the decarboxylation of L-aspartate to produce beta-alanine for coenzyme A (CoA) biosynthesis. This is Probable L-tyrosine/L-aspartate decarboxylase from Methanocella arvoryzae (strain DSM 22066 / NBRC 105507 / MRE50).